The primary structure comprises 320 residues: tRNA dimethylallyltransferase (320 aa).

An ATP-binding site is contributed by 10–17; that stretch reads GPTASGKT. 12-17 is a substrate binding site; the sequence is TASGKT. 3 interaction with substrate tRNA regions span residues 35–38, 159–163, and 241–246; these read DSAL, QRIQR, and RCVGYR.

The protein belongs to the IPP transferase family. In terms of assembly, monomer. The cofactor is Mg(2+).

The enzyme catalyses adenosine(37) in tRNA + dimethylallyl diphosphate = N(6)-dimethylallyladenosine(37) in tRNA + diphosphate. Functionally, catalyzes the transfer of a dimethylallyl group onto the adenine at position 37 in tRNAs that read codons beginning with uridine, leading to the formation of N6-(dimethylallyl)adenosine (i(6)A). The polypeptide is tRNA dimethylallyltransferase (Aromatoleum aromaticum (strain DSM 19018 / LMG 30748 / EbN1) (Azoarcus sp. (strain EbN1))).